The primary structure comprises 240 residues: Uridylate kinase (240 aa).

Residue 13 to 16 (KASG) participates in ATP binding. An involved in allosteric activation by GTP region spans residues 21–26 (GSQGFG). Position 55 (G55) interacts with UMP. Positions 56 and 60 each coordinate ATP. Residues D75 and 136-143 (TGNPFFTT) each bind UMP. ATP is bound by residues T163, Q164, Y169, and D172.

It belongs to the UMP kinase family. Homohexamer.

The protein localises to the cytoplasm. The enzyme catalyses UMP + ATP = UDP + ADP. It participates in pyrimidine metabolism; CTP biosynthesis via de novo pathway; UDP from UMP (UMPK route): step 1/1. With respect to regulation, allosterically activated by GTP. Inhibited by UTP. Its function is as follows. Catalyzes the reversible phosphorylation of UMP to UDP. In Brucella abortus biovar 1 (strain 9-941), this protein is Uridylate kinase.